We begin with the raw amino-acid sequence, 281 residues long: Diaminopimelate epimerase (281 aa).

Positions 14 and 65 each coordinate substrate. Cysteine 74 functions as the Proton donor in the catalytic mechanism. Residues 75 to 76 (GN), asparagine 165, asparagine 198, and 216 to 217 (ER) each bind substrate. The active-site Proton acceptor is the cysteine 225. A substrate-binding site is contributed by 226–227 (GT).

It belongs to the diaminopimelate epimerase family. As to quaternary structure, homodimer.

The protein localises to the cytoplasm. The catalysed reaction is (2S,6S)-2,6-diaminopimelate = meso-2,6-diaminopimelate. It functions in the pathway amino-acid biosynthesis; L-lysine biosynthesis via DAP pathway; DL-2,6-diaminopimelate from LL-2,6-diaminopimelate: step 1/1. In terms of biological role, catalyzes the stereoinversion of LL-2,6-diaminopimelate (L,L-DAP) to meso-diaminopimelate (meso-DAP), a precursor of L-lysine and an essential component of the bacterial peptidoglycan. In Leptospira borgpetersenii serovar Hardjo-bovis (strain JB197), this protein is Diaminopimelate epimerase.